We begin with the raw amino-acid sequence, 231 residues long: Orotidine 5'-phosphate decarboxylase (231 aa).

Residues Asp11, Lys33, 60 to 69 (DLKFHDIPNT), Thr120, Arg181, Gln190, Gly210, and Arg211 each bind substrate. Lys62 (proton donor) is an active-site residue.

This sequence belongs to the OMP decarboxylase family. Type 1 subfamily. In terms of assembly, homodimer.

The enzyme catalyses orotidine 5'-phosphate + H(+) = UMP + CO2. The protein operates within pyrimidine metabolism; UMP biosynthesis via de novo pathway; UMP from orotate: step 2/2. Functionally, catalyzes the decarboxylation of orotidine 5'-monophosphate (OMP) to uridine 5'-monophosphate (UMP). This Vibrio cholerae serotype O1 (strain ATCC 39541 / Classical Ogawa 395 / O395) protein is Orotidine 5'-phosphate decarboxylase.